The sequence spans 144 residues: Bacilliredoxin BT9727_3899 (144 aa).

Belongs to the bacilliredoxin family.

The chain is Bacilliredoxin BT9727_3899 from Bacillus thuringiensis subsp. konkukian (strain 97-27).